The following is a 141-amino-acid chain: Hemoglobin subunit alpha-3 (141 aa).

One can recognise a Globin domain in the interval 1-141; the sequence is VLSPADKTNV…VSTVLTSKYR (141 aa). Residue His58 coordinates O2. His87 is a binding site for heme b.

It belongs to the globin family. In terms of assembly, heterotetramer of two alpha chains and two beta chains. In terms of tissue distribution, red blood cells.

Its function is as follows. Involved in oxygen transport from the lung to the various peripheral tissues. This is Hemoglobin subunit alpha-3 from Pan troglodytes (Chimpanzee).